A 237-amino-acid chain; its full sequence is Ribosomal RNA small subunit methyltransferase G (237 aa).

Residues glycine 72, leucine 77, 123–124 (AE), and arginine 138 contribute to the S-adenosyl-L-methionine site. Residues 210–237 (TALETGTKAAPSRSPRKPGGRKKRGRKR) are disordered. Basic residues predominate over residues 223–237 (SPRKPGGRKKRGRKR).

The protein belongs to the methyltransferase superfamily. RNA methyltransferase RsmG family.

It is found in the cytoplasm. In terms of biological role, specifically methylates the N7 position of guanine in position 518 of 16S rRNA. The sequence is that of Ribosomal RNA small subunit methyltransferase G from Thermobifida fusca (strain YX).